Here is a 26-residue protein sequence, read N- to C-terminus: uncharacterized protein (26 aa).

Over residues M1–V16 the composition is skewed to polar residues. Positions M1 to S26 are disordered.

This is an uncharacterized protein from Saccharomyces cerevisiae (strain ATCC 204508 / S288c) (Baker's yeast).